A 78-amino-acid polypeptide reads, in one-letter code: Large ribosomal subunit protein bL28 (78 aa).

Residues 1-22 (MSRVCQVTGKRPMSGNNRSHAM) are disordered.

Belongs to the bacterial ribosomal protein bL28 family.

This is Large ribosomal subunit protein bL28 from Yersinia pseudotuberculosis serotype O:1b (strain IP 31758).